The following is a 365-amino-acid chain: Outer membrane protein assembly factor BamC (365 aa).

Positions 1 to 19 (MKHNRLAIAALAPVLILVG) are cleaved as a signal peptide. Cys-20 is lipidated: N-palmitoyl cysteine. A lipid anchor (S-diacylglycerol cysteine) is attached at Cys-20.

This sequence belongs to the BamC family. In terms of assembly, part of the Bam complex.

Its subcellular location is the cell outer membrane. Its function is as follows. Part of the outer membrane protein assembly complex, which is involved in assembly and insertion of beta-barrel proteins into the outer membrane. This Ferrimonas balearica (strain DSM 9799 / CCM 4581 / KCTC 23876 / PAT) protein is Outer membrane protein assembly factor BamC.